A 589-amino-acid chain; its full sequence is Cytochrome P450 monooxygenase TRI13 (589 aa).

The signal sequence occupies residues methionine 1–proline 21. 4 N-linked (GlcNAc...) asparagine glycosylation sites follow: asparagine 52, asparagine 219, asparagine 243, and asparagine 366. Heme is bound at residue cysteine 531.

It belongs to the cytochrome P450 family. Heme is required as a cofactor.

The protein operates within sesquiterpene biosynthesis; trichothecene biosynthesis. Cytochrome P450 monooxygenase; part of the core gene cluster that mediates the biosynthesis of trichothecenes, a very large family of chemically related bicyclic sesquiterpene compounds acting as mycotoxins, including T2-toxin. The biosynthesis of trichothecenes begins with the cyclization of farnesyl diphosphate to trichodiene and is catalyzed by the trichodiene synthase TRI5. Trichodiene undergoes a series of oxygenations catalyzed by the cytochrome P450 monooxygenase TRI4. TRI4 controls the addition of four oxygens at C-2, C-3, C-11, and the C-12, C-13-epoxide to form the intermediate isotrichotriol. Isotrichotriol then undergoes a non-enzymatic isomerization and cyclization to form isotrichodermol. During this process, the oxygen at the C-2 position becomes the pyran ring oxygen and the hydroxyl group at C-11 is lost. More complex type A trichothecenes are built by modifying isotrichodermol through a series of paired hydroxylation and acetylation or acylation steps. Isotrichodermol is converted to isotrichodermin by the acetyltransferase TRI101. TRI101 encodes a C-3 transacetylase that acts as a self-protection or resistance factor during biosynthesis and that the presence of a free C-3 hydroxyl group is a key component of Fusarium trichothecene phytotoxicity. A second hydroxyl group is added to C-15 by the trichothecene C-15 hydroxylase TRI11, producing 15-decalonectrin, which is then acetylated by TRI3, producing calonectrin. A third hydroxyl group is added at C-4 by the cytochrome P450 monooxygenase TRI13, converting calonectrin to 3,15-diacetoxyspirpenol, which is subsequently acetylated by the acetyltransferase TRI7. A fourth hydroxyl group is added to C-8 by the cytochrome P450 monooxygenase TRI1, followed by the addition of an isovaleryl moiety by TRI16. Finally, the acetyl group is removed from the C-3 position by the trichothecene C-3 esterase TRI8 to produce T-2 toxin. This chain is Cytochrome P450 monooxygenase TRI13, found in Fusarium sporotrichioides.